The sequence spans 478 residues: MAPLRPLLILALLAWVALADQESCKGRCTEGFNVDKKCQCDELCSYYQSCCTDYTAECKPQVTRGDVFTMPEDEYTVYDDGEEKNNATVHEQVGGPSLTSDLQAQSKGNPEQTPVLKPEEEAPAPEVGASKPEGIDSRPETLHPGRPQPPAEEELCSGKPFDAFTDLKNGSLFAFRGQYCYELDEKAVRPGYPKLIRDVWGIEGPIDAAFTRINCQGKTYLFKGSQYWRFEDGVLDPDYPRNISDGFDGIPDNVDAALALPAHSYSGRERVYFFKGKQYWEYQFQHQPSQEECEGSSLSAVFEHFAMMQRDSWEDIFELLFWGRTSAGTRQPQFISRDWHGVPGQVDAAMAGRIYISGMAPRPSLAKKQRFRHRNRKGYRSQRGHSRGRNQNSRRPSRATWLSLFSSEESNLGANNYDDYRMDWLVPATCEPIQSVFFFSGDKYYRVNLRTRRVDTVDPPYPRSIAQYWLGCPAPGHL.

Positions 1 to 19 (MAPLRPLLILALLAWVALA) are cleaved as a signal peptide. Positions 20-63 (DQESCKGRCTEGFNVDKKCQCDELCSYYQSCCTDYTAECKPQVT) constitute an SMB domain. 7 disulfides stabilise this stretch: C24–C28, C24–C40, C28–C58, C38–C40, C38–C51, C44–C50, and C51–C58. A Cell attachment site motif is present at residues 64 to 66 (RGD). T69 carries the post-translational modification Phosphothreonine; by CK2; in vitro. Position 75 is a sulfotyrosine (Y75). Phosphothreonine; by CK2; in vitro is present on T76. A Sulfotyrosine modification is found at Y78. N-linked (GlcNAc...) (complex) asparagine glycosylation occurs at N86. A disordered region spans residues 91–158 (EQVGGPSLTS…PPAEEELCSG (68 aa)). Over residues 97–112 (SLTSDLQAQSKGNPEQ) the composition is skewed to polar residues. Phosphoserine occurs at positions 130 and 137. Residues 133 to 143 (EGIDSRPETLH) show a composition bias toward basic and acidic residues. Hemopexin repeat units lie at residues 158 to 202 (GKPF…VWGI), 203 to 250 (EGPI…FDGI), and 251 to 305 (PDNV…FEHF). N169 carries N-linked (GlcNAc...) asparagine glycosylation. N242 is a glycosylation site (N-linked (GlcNAc...) (complex) asparagine). The residue at position 282 (Y282) is a Sulfotyrosine. Cysteines 293 and 430 form a disulfide. Phosphoserine is present on S312. The interval 362–395 (RPSLAKKQRFRHRNRKGYRSQRGHSRGRNQNSRR) is heparin-binding. The disordered stretch occupies residues 364 to 398 (SLAKKQRFRHRNRKGYRSQRGHSRGRNQNSRRPSR). Residues 365–388 (LAKKQRFRHRNRKGYRSQRGHSRG) show a composition bias toward basic residues. S397 is subject to Phosphoserine; by PKA. Sulfotyrosine is present on residues Y417 and Y420. The Hemopexin 4 repeat unit spans residues 419–472 (DYRMDWLVPATCEPIQSVFFFSGDKYYRVNLRTRRVDTVDPPYPRSIAQYWLGC).

Exists in two forms: a single chain 75 kDa form (V75) and a clipped form composed of two chains (65 kDa and 10 kDa) (V65+V10) which are held together by a disulfide bond. Interacts with SERPINE1/PAI1, insulin and C1QBP. In terms of assembly, (Microbial infection) Interacts (via hemopexin repeat 2) with P.falciparum (isolate CDC / Honduras) SERA5 P47 (via C-terminus); may form heterotetramers of two VTN and SERA5 P47 heterodimers; the interaction may protect merozoites from phagocytosis by host monocytes; VTN glycosylation appears to be dispensable for the interaction. Sulfated on tyrosine residues. In terms of processing, N- and O-glycosylated. Post-translationally, phosphorylation on Thr-69 and Thr-76 favors cell adhesion and spreading. It has been suggested that the active SMB domain may be permitted considerable disulfide bond heterogeneity or variability, thus two alternate disulfide patterns based on 3D structures are described with 1 disulfide bond conserved in both. In terms of processing, phosphorylation sites are present in the extracellular medium. Expressed in the retina pigment epithelium (at protein level). Expressed in plasma (at protein level). Expressed in serum (at protein level).

It is found in the secreted. It localises to the extracellular space. Its subcellular location is the parasitophorous vacuole. Vitronectin is a cell adhesion and spreading factor found in serum and tissues. Vitronectin interact with glycosaminoglycans and proteoglycans. Is recognized by certain members of the integrin family and serves as a cell-to-substrate adhesion molecule. Inhibitor of the membrane-damaging effect of the terminal cytolytic complement pathway. Its function is as follows. Somatomedin-B is a growth hormone-dependent serum factor with protease-inhibiting activity. This is Vitronectin (VTN) from Homo sapiens (Human).